The chain runs to 38 residues: Conotoxin r7a (38 aa).

Positions 1–5 (APAKR) are excised as a propeptide. The residue at position 6 (Trp6) is a 6'-bromotryptophan. A 4-carboxyglutamate mark is found at Glu10 and Glu11. 3 disulfides stabilise this stretch: Cys12-Cys26, Cys19-Cys30, and Cys25-Cys35. Trp15 carries the post-translational modification 6'-bromotryptophan. A 4-carboxyglutamate mark is found at Glu20 and Glu31. Trp38 is modified (6'-bromotryptophan).

Belongs to the conotoxin O2 superfamily. In terms of tissue distribution, expressed by the venom duct.

It is found in the secreted. In terms of biological role, induces a sleep-like state in mice. The protein is Conotoxin r7a of Conus radiatus (Rayed cone).